Reading from the N-terminus, the 388-residue chain is MSTTTQSDAGISREIVVIGSGFAAQQLVKSLRKLDAEQPIRLITADSGDEYNKPDLSHVVSRGCAAAAMTRQSGSDFAEQQRIALLPHCPVLGIDPVRRLVLTEQGEFPYGQLVLATGASAVRPELPGSEHLVTLNSQQEYAAVEGAIQQARRILVLGAGLIGCELAMDMASDGREVTLLDLADSPLSALLPATLTQPLQQALRSQGVSLQFGTGLARIDGQPGDGWRVTLTDGRTSEQDLVIAAIGLRPNLALARGAGLAVERGILVGDRLQTSDPHIFALGDCVQWQGQLLPFLQPIVLGANALARTLLGTPTPLALPPMLVKVKTPRYPLQLAGRTQGEDLAWQCRWNSHGMVAEARDQAGELCGFVVGGDQMSAAFPLLRQLPR.

This sequence belongs to the FAD-dependent oxidoreductase family. Requires FAD as cofactor.

Its subcellular location is the cytoplasm. The catalysed reaction is 2 reduced [nitric oxide reductase rubredoxin domain] + NAD(+) + H(+) = 2 oxidized [nitric oxide reductase rubredoxin domain] + NADH. The protein operates within nitrogen metabolism; nitric oxide reduction. Its function is as follows. One of at least two accessory proteins for anaerobic nitric oxide (NO) reductase. Reduces the rubredoxin moiety of NO reductase. The protein is Nitric oxide reductase FlRd-NAD(+) reductase of Aeromonas hydrophila subsp. hydrophila (strain ATCC 7966 / DSM 30187 / BCRC 13018 / CCUG 14551 / JCM 1027 / KCTC 2358 / NCIMB 9240 / NCTC 8049).